A 626-amino-acid chain; its full sequence is Chaperone protein HtpG (626 aa).

Residues 1 to 341 (METKQFKAES…SEDLSLNISR (341 aa)) are a; substrate-binding. The interval 342 to 552 (EILQHDRQLK…EGELSIEMEK (211 aa)) is b. Residues 553–626 (VLNAMPNNQN…FTNNICKIMK (74 aa)) form a c region.

The protein belongs to the heat shock protein 90 family. Homodimer.

The protein resides in the cytoplasm. Molecular chaperone. Has ATPase activity. The sequence is that of Chaperone protein HtpG from Clostridium botulinum (strain 657 / Type Ba4).